We begin with the raw amino-acid sequence, 668 residues long: Bifunctional polymyxin resistance protein ArnA (668 aa).

The tract at residues 1 to 307 is formyltransferase ArnAFT; the sequence is MSAKTVVFAY…ELGLVDGSLL (307 aa). The active-site Proton donor; for formyltransferase activity is the His106. (6R)-10-formyltetrahydrofolate contacts are provided by residues Arg116 and 138 to 142; that span reads VKRAD. Residues 317-668 are dehydrogenase ArnADH; that stretch reads RRTRVLILGV…IERPSNKEAC (352 aa). Residues Asp350 and 371 to 372 each bind NAD(+); that span reads DI. UDP-alpha-D-glucuronate-binding positions include Ala396, Tyr401, and 435–436; that span reads TS. Glu437 serves as the catalytic Proton acceptor; for decarboxylase activity. Residues Arg463, Asn494, 528-537, and Tyr615 contribute to the UDP-alpha-D-glucuronate site; that span reads RLFDGGEQKR. Residue Arg621 is the Proton donor; for decarboxylase activity of the active site.

In the N-terminal section; belongs to the Fmt family. UDP-L-Ara4N formyltransferase subfamily. It in the C-terminal section; belongs to the NAD(P)-dependent epimerase/dehydratase family. UDP-glucuronic acid decarboxylase subfamily. In terms of assembly, homohexamer, formed by a dimer of trimers.

It catalyses the reaction UDP-alpha-D-glucuronate + NAD(+) = UDP-beta-L-threo-pentopyranos-4-ulose + CO2 + NADH. It carries out the reaction UDP-4-amino-4-deoxy-beta-L-arabinose + (6R)-10-formyltetrahydrofolate = UDP-4-deoxy-4-formamido-beta-L-arabinose + (6S)-5,6,7,8-tetrahydrofolate + H(+). Its pathway is nucleotide-sugar biosynthesis; UDP-4-deoxy-4-formamido-beta-L-arabinose biosynthesis; UDP-4-deoxy-4-formamido-beta-L-arabinose from UDP-alpha-D-glucuronate: step 1/3. It participates in nucleotide-sugar biosynthesis; UDP-4-deoxy-4-formamido-beta-L-arabinose biosynthesis; UDP-4-deoxy-4-formamido-beta-L-arabinose from UDP-alpha-D-glucuronate: step 3/3. The protein operates within bacterial outer membrane biogenesis; lipopolysaccharide biosynthesis. Functionally, bifunctional enzyme that catalyzes the oxidative decarboxylation of UDP-glucuronic acid (UDP-GlcUA) to UDP-4-keto-arabinose (UDP-Ara4O) and the addition of a formyl group to UDP-4-amino-4-deoxy-L-arabinose (UDP-L-Ara4N) to form UDP-L-4-formamido-arabinose (UDP-L-Ara4FN). The modified arabinose is attached to lipid A and is required for resistance to polymyxin and cationic antimicrobial peptides. The protein is Bifunctional polymyxin resistance protein ArnA of Pseudomonas fluorescens (strain Pf0-1).